The sequence spans 123 residues: Small ribosomal subunit protein uS12 (123 aa).

Residues 1-31 (MPTINQLIRKPREAQKARDKAPALQASPQKR) are disordered. Residues 10-21 (KPREAQKARDKA) show a composition bias toward basic and acidic residues. Position 89 is a 3-methylthioaspartic acid (Asp89).

This sequence belongs to the universal ribosomal protein uS12 family. As to quaternary structure, part of the 30S ribosomal subunit. Contacts proteins S8 and S17. May interact with IF1 in the 30S initiation complex.

In terms of biological role, with S4 and S5 plays an important role in translational accuracy. Its function is as follows. Interacts with and stabilizes bases of the 16S rRNA that are involved in tRNA selection in the A site and with the mRNA backbone. Located at the interface of the 30S and 50S subunits, it traverses the body of the 30S subunit contacting proteins on the other side and probably holding the rRNA structure together. The combined cluster of proteins S8, S12 and S17 appears to hold together the shoulder and platform of the 30S subunit. In Xanthobacter autotrophicus (strain ATCC BAA-1158 / Py2), this protein is Small ribosomal subunit protein uS12.